Reading from the N-terminus, the 1375-residue chain is DNA-directed RNA polymerase subunit beta' (1375 aa).

Positions 70, 72, 85, and 88 each coordinate Zn(2+). 3 residues coordinate Mg(2+): D460, D462, and D464. Residues C800, C874, C881, and C884 each coordinate Zn(2+).

It belongs to the RNA polymerase beta' chain family. As to quaternary structure, the RNAP catalytic core consists of 2 alpha, 1 beta, 1 beta' and 1 omega subunit. When a sigma factor is associated with the core the holoenzyme is formed, which can initiate transcription. Mg(2+) serves as cofactor. Zn(2+) is required as a cofactor.

It catalyses the reaction RNA(n) + a ribonucleoside 5'-triphosphate = RNA(n+1) + diphosphate. Functionally, DNA-dependent RNA polymerase catalyzes the transcription of DNA into RNA using the four ribonucleoside triphosphates as substrates. In Bdellovibrio bacteriovorus (strain ATCC 15356 / DSM 50701 / NCIMB 9529 / HD100), this protein is DNA-directed RNA polymerase subunit beta'.